The chain runs to 768 residues: MSNLSKGTGSRKDTKMRIRAFPMTMDEKYVNSIWDLLKNAIQEIQRKNNSGLSFEELYRNAYTMVLHKHGEKLYTGLREVVTEHLINKVREDVLNSLNNNFLQTLNQAWNDHQTAMVMIRDILMYMDRVYVQQNNVENVYNLGLIIFRDQVVRYGCIRDHLRQTLLDMIARERKGEVVDRGAIRNACQMLMILGLEGRSVYEEDFEAPFLEMSAEFFQMESQKFLAENSASVYIKKVEARINEEIERVMHCLDKSTEEPIVKVVERELISKHMKTIVEMENSGLVHMLKNGKTEDLACMYKLFSRVPNGLKTMCECMSCYLREQGKALVSEEGEGKNPVDYIQGLLDLKSRFDRFLQESFNNDRLFKQTIAGDFEYFLNLNSRSPEYLSLFIDDKLKKGVKGLTEQEVETILDKAMVLFRFMQEKDVFERYYKQHLARRLLTNKSVSDDSEKNMISKLKTECGCQFTSKLEGMFRDMSISNTTMDEFRQHLQATGVSLGGVDLTVRVLTTGYWPTQSATPKCNIPPAPRHAFEIFRRFYLAKHSGRQLTLQHHMGSADLNATFYGPVKKEDGSEVGVGGAQVTGSNTRKHILQVSTFQMTILMLFNNREKYTFEEIQQETDIPERELVRALQSLACGKPTQRVLTKEPKSKEIESGHIFTVNDQFTSKLHRVKIQTVAAKQGESDPERKETRQKVDDDRKHEIEAAIVRIMKSRKKMQHNVLVAEVTQQLKARFLPSPVVIKKRIEGLIEREYLARTPEDRKVYTYVA.

Position 2 is an N-acetylserine (S2). The interval 2–41 is interaction with KLHL18; sequence SNLSKGTGSRKDTKMRIRAFPMTMDEKYVNSIWDLLKNAI. Phosphoserine is present on S585. The tract at residues 677–698 is disordered; it reads VAAKQGESDPERKETRQKVDDD. Residues 682-698 show a composition bias toward basic and acidic residues; that stretch reads GESDPERKETRQKVDDD. A Cullin neddylation domain is found at 698 to 760; that stretch reads DRKHEIEAAI…REYLARTPED (63 aa). K712 is covalently cross-linked (Glycyl lysine isopeptide (Lys-Gly) (interchain with G-Cter in NEDD8)).

The protein belongs to the cullin family. In terms of assembly, forms neddylation-dependent homodimers. Component of multiple BCR (BTB-CUL3-RBX1) E3 ubiquitin-protein ligase complexes formed of CUL3, RBX1 and a variable BTB domain-containing protein acting as both, adapter to cullin and substrate recognition subunit. The BCR complex may be active as a heterodimeric complex, in which NEDD8, covalently attached to one CUL3 molecule, binds to the C-terminus of a second CUL3 molecule. Interacts with RBX1, RNF7 and TIP120A/CAND1. Part of the BCR(SPOP) containing SPOP, and of BCR containing homodimeric SPOPL or the heterodimer formed by SPOP and SPOPL. Part of the probable BCR(KLHL9-KLHL13) complex with BTB domain proteins KLHL9 and KLHL13. Part of the BCR(KLHL41) complex containing KLHL41. Component of the BCR(KLHL12) E3 ubiquitin ligase complex, at least composed of CUL3 and KLHL12 and RBX1. Component of the BCR(KLHL3) E3 ubiquitin ligase complex, at least composed of CUL3 and KLHL3 and RBX1. Part of the BCR(ENC1) complex containing ENC1. Part of a complex consisting of BMI1/PCGF4, CUL3 and SPOP. Part of a complex consisting of BRMS1, CUL3 and SPOP. Component of the BCR(KLHL21) E3 ubiquitin ligase complex, at least composed of CUL3, KLHL21 and RBX1. Component of the BCR(KLHL22) E3 ubiquitin ligase complex, at least composed of CUL3, KLHL22 and RBX1. Component of the BCR(KLHL25) E3 ubiquitin ligase complex, at least composed of CUL3, KLHL25 and RBX1. Part of a complex consisting of MACROH2A1, CUL3 and SPOP. Component of the BCR(KLHL42) E3 ubiquitin ligase complex, at least composed of CUL3 and KLHL42. Component of the BCR(KBTBD8) E3 ubiquitin ligase complex, at least composed of CUL3, KBTBD8 and RBX1. Interacts with KLHL42 (via the BTB domain). Interacts with KATNA1; the interaction is enhanced by KLHL42. Interacts with KCTD5, KLHL9, KLHL11, KLHL13, GAN, ZBTB16, KLHL3, KLHL15, KLHL20, KLHL36, GMCL2, BTBD1. Part of a complex that contains CUL3, RBX1 and GAN. Interacts (via BTB domain) with KLHL17; the interaction regulates surface GRIK2 expression. Interacts with KCTD7. Part of the BCR(GAN) complex containing GAN. Part of the BCR(KEAP1) complex containing KEAP1. Interacts with KAT5 and ATF2. Interacts with KCTD17 in the BCR(KCTD17) E3 ubiquitin ligase complex, at least composed of CUL3, KCTD17 and RBX1. Interacts (when neddylated) with ARIH1; leading to activate the E3 ligase activity of ARIH1. Interacts with COPS9. Interacts with PPP2R5B; this interaction is indirect and mediated through KLHL15-binding and leads to PPP2R5B proteasomal degradation. Interacts with RBBP8/CtIP; this interaction is indirect and mediated through KLHL15-binding and leads to RBBP8 proteasomal degradation. Interacts with KLHL24 in the BCR(KLHL24) E3 ubiquitin ligase complex, composed of CUL3, RBX1 and KLHL24. Interacts with RHOBTB2. Interacts with CYCE. Interacts with KLHL10. Interacts with AURKA and KLHL18 (via BTB domain). Interacts (unneddylated form) with DCUN1D1, DCUN1D2, DCUN1D3, DCUN1D4 and DCUN1D5; these interactions promote the cullin neddylation. Component of a BCR3 (BTB-CUL3-RBX1) E3 ubiquitin ligase complex, also named Cul3-RING ubiquitin ligase complex CUL3(KBTBD6/7), composed of CUL3, RBX1, KBTBD6 and KBTBD7. Component of the BCR(KBTBD2) E3 ubiquitin ligase complex, at least composed of CUL3, KBTBD2 and RBX1. Interacts with KBTBD2 (via the BTB domain). Component of the BCR(KBTBD4) E3 ubiquitin ligase complex, at least composed of CUL3, KBTBD4 and RBX1. Post-translationally, neddylated. Attachment of NEDD8 is required for the E3 ubiquitin-protein ligase activity of the BCR complex. Deneddylated via its interaction with the COP9 signalosome (CSN) complex. As to expression, widely expressed, with highest expression in brain, spleen and testis. In the testis, it is mainly expressed in spermatids.

It is found in the nucleus. Its subcellular location is the golgi apparatus. The protein resides in the cell projection. The protein localises to the cilium. It localises to the flagellum. It is found in the cytoplasm. Its subcellular location is the cytoskeleton. The protein resides in the spindle. The protein localises to the microtubule organizing center. It localises to the centrosome. It is found in the spindle pole. Its pathway is protein modification; protein ubiquitination. Core component of multiple cullin-RING-based BCR (BTB-CUL3-RBX1) E3 ubiquitin-protein ligase complexes which mediate the ubiquitination and subsequent proteasomal degradation of target proteins. BCR complexes and ARIH1 collaborate in tandem to mediate ubiquitination of target proteins. As a scaffold protein may contribute to catalysis through positioning of the substrate and the ubiquitin-conjugating enzyme. The E3 ubiquitin-protein ligase activity of the complex is dependent on the neddylation of the cullin subunit and is inhibited by the association of the deneddylated cullin subunit with TIP120A/CAND1. The functional specificity of the BCR complex depends on the BTB domain-containing protein as the substrate recognition component. BCR(KLHL42) is involved in ubiquitination of KATNA1. BCR(SPOP) is involved in ubiquitination of BMI1/PCGF4, BRMS1, MACROH2A1 and DAXX, GLI2 and GLI3. Can also form a cullin-RING-based BCR (BTB-CUL3-RBX1) E3 ubiquitin-protein ligase complex containing homodimeric SPOPL or the heterodimer formed by SPOP and SPOPL; these complexes have lower ubiquitin ligase activity. BCR(KLHL9-KLHL13) controls the dynamic behavior of AURKB on mitotic chromosomes and thereby coordinates faithful mitotic progression and completion of cytokinesis. BCR(KLHL12) is involved in ER-Golgi transport by regulating the size of COPII coats, thereby playing a key role in collagen export, which is required for embryonic stem (ES) cells division: BCR(KLHL12) acts by mediating monoubiquitination of SEC31 (SEC31A or SEC31B). BCR(KLHL3) acts as a regulator of ion transport in the distal nephron; by mediating ubiquitination of WNK4. The BCR(KLHL20) E3 ubiquitin ligase complex is involved in interferon response and anterograde Golgi to endosome transport: it mediates both ubiquitination leading to degradation and 'Lys-33'-linked ubiquitination. The BCR(KLHL21) E3 ubiquitin ligase complex regulates localization of the chromosomal passenger complex (CPC) from chromosomes to the spindle midzone in anaphase and mediates the ubiquitination of AURKB. The BCR(KLHL22) ubiquitin ligase complex mediates monoubiquitination of PLK1, leading to PLK1 dissociation from phosphoreceptor proteins and subsequent removal from kinetochores, allowing silencing of the spindle assembly checkpoint (SAC) and chromosome segregation. The BCR(KLHL22) ubiquitin ligase complex is also responsible for the amino acid-stimulated 'Lys-48' polyubiquitination and proteasomal degradation of DEPDC5. Through the degradation of DEPDC5, releases the GATOR1 complex-mediated inhibition of the TORC1 pathway. The BCR(KLHL25) ubiquitin ligase complex is involved in translational homeostasis by mediating ubiquitination and subsequent degradation of hypophosphorylated EIF4EBP1 (4E-BP1). The BCR(KLHL25) ubiquitin ligase complex is also involved in lipid synthesis by mediating ubiquitination and degradation of ACLY. The BCR(KBTBD8) complex acts by mediating monoubiquitination of NOLC1 and TCOF1, leading to remodel the translational program of differentiating cells in favor of neural crest specification. Involved in ubiquitination of cyclin E and of cyclin D1 (in vitro) thus involved in regulation of G1/S transition. Involved in the ubiquitination of KEAP1, ENC1 and KLHL41. In concert with ATF2 and RBX1, promotes degradation of KAT5 thereby attenuating its ability to acetylate and activate ATM. The BCR(KCTD17) E3 ubiquitin ligase complex mediates ubiquitination and degradation of TCHP, a down-regulator of cilium assembly, thereby inducing ciliogenesis. The BCR(KLHL24) E3 ubiquitin ligase complex mediates ubiquitination of KRT14, controls KRT14 levels during keratinocytes differentiation, and is essential for skin integrity. The BCR(KLHL18) E3 ubiquitin ligase complex mediates the ubiquitination of AURKA leading to its activation at the centrosome which is required for initiating mitotic entry. The BCR(KEAP1) E3 ubiquitin ligase complex acts as a key sensor of oxidative and electrophilic stress by mediating ubiquitination and degradation of NFE2L2/NRF2, a transcription factor regulating expression of many cytoprotective genes. As part of the CUL3(KBTBD6/7) E3 ubiquitin ligase complex functions mediates 'Lys-48' ubiquitination and proteasomal degradation of TIAM1. By controlling the ubiquitination of that RAC1 guanine exchange factors (GEF), regulates RAC1 signal transduction and downstream biological processes including the organization of the cytoskeleton, cell migration and cell proliferation. The BCR(KBTBD4) E3 ubiquitin ligase complex targets CoREST corepressor complex components RCOR1, KDM1A/LSD1 and HDAC2 for proteasomal degradation with RCOR1 likely to be the primary target while degradation of KDM1A and HDAC2 is likely due to their association with RCOR1. It also targets RCOR3, MIER2 and MIER3 for proteasomal degradation as well as associated proteins ZNF217 and RREB1 with degradation being dependent on the presence of an ELM2 domain in the target proteins. The BCR(ARMC5) complex mediates premature transcription termination of transcripts that are unfavorably configured for transcriptional elongation by mediating ubiquitination of Pol II subunit POLR2A. Required for 'Lys-63'-linked ubiquitination of large ribosomal subunit protein MRPL12. This Mus musculus (Mouse) protein is Cullin-3 (Cul3).